Consider the following 322-residue polypeptide: UDP-galactose transporter homolog 1 (322 aa).

The next 5 helical transmembrane spans lie at 4-24 (FMRQ…SWAV), 43-63 (ALLS…WNWF), 76-96 (FLGY…FGYA), 105-125 (TVIL…VFVY), and 129-149 (FPPH…IFSY). N-linked (GlcNAc...) asparagine glycosylation occurs at N152. 4 helical membrane-spanning segments follow: residues 164–184 (SPIG…TNTT), 199–219 (MMIA…ISPF), 250–270 (LFIF…ITLT), and 290–310 (IQWL…GLKI). N-linked (GlcNAc...) asparagine glycosylation is found at N313 and N314.

Belongs to the nucleotide-sugar transporter family. SLC35B subfamily.

The protein resides in the endoplasmic reticulum membrane. In terms of biological role, may be involved in specific transport of UDP-Gal from the cytosol to the Golgi lumen. Involved in the maintenance of optimal conditions for the folding of secretory pathway proteins in the endoplasmic reticulum. The sequence is that of UDP-galactose transporter homolog 1 (hut1) from Schizosaccharomyces pombe (strain 972 / ATCC 24843) (Fission yeast).